The primary structure comprises 211 residues: ATP-dependent Clp protease proteolytic subunit (211 aa).

Ser-114 serves as the catalytic Nucleophile. His-139 is a catalytic residue.

This sequence belongs to the peptidase S14 family. As to quaternary structure, fourteen ClpP subunits assemble into 2 heptameric rings which stack back to back to give a disk-like structure with a central cavity, resembling the structure of eukaryotic proteasomes.

The protein localises to the cytoplasm. It catalyses the reaction Hydrolysis of proteins to small peptides in the presence of ATP and magnesium. alpha-casein is the usual test substrate. In the absence of ATP, only oligopeptides shorter than five residues are hydrolyzed (such as succinyl-Leu-Tyr-|-NHMec, and Leu-Tyr-Leu-|-Tyr-Trp, in which cleavage of the -Tyr-|-Leu- and -Tyr-|-Trp bonds also occurs).. Its function is as follows. Cleaves peptides in various proteins in a process that requires ATP hydrolysis. Has a chymotrypsin-like activity. Plays a major role in the degradation of misfolded proteins. The sequence is that of ATP-dependent Clp protease proteolytic subunit from Pseudomonas fluorescens (strain SBW25).